The following is a 411-amino-acid chain: Tyrosine--tRNA ligase (411 aa).

Residues 48–57 carry the 'HIGH' region motif; it reads PTAPDIHLGH. A 'KMSKS' region motif is present at residues 232–236; it reads KMSKS. An ATP-binding site is contributed by lysine 235. In terms of domain architecture, S4 RNA-binding spans 347–409; it reads VLLPKVLFSA…GKRRFLKIIF (63 aa).

This sequence belongs to the class-I aminoacyl-tRNA synthetase family. TyrS type 2 subfamily. As to quaternary structure, homodimer.

The protein resides in the cytoplasm. It carries out the reaction tRNA(Tyr) + L-tyrosine + ATP = L-tyrosyl-tRNA(Tyr) + AMP + diphosphate + H(+). Functionally, catalyzes the attachment of tyrosine to tRNA(Tyr) in a two-step reaction: tyrosine is first activated by ATP to form Tyr-AMP and then transferred to the acceptor end of tRNA(Tyr). This is Tyrosine--tRNA ligase from Carboxydothermus hydrogenoformans (strain ATCC BAA-161 / DSM 6008 / Z-2901).